A 241-amino-acid chain; its full sequence is Lipoprotein-releasing system ATP-binding protein LolD 2 (241 aa).

The region spanning 6–241 (LDAQQLSKSY…YKSYEKSTAV (236 aa)) is the ABC transporter domain. An ATP-binding site is contributed by 43 to 50 (GASGSGKT).

The protein belongs to the ABC transporter superfamily. Lipoprotein translocase (TC 3.A.1.125) family. The complex is composed of two ATP-binding proteins (LolD) and two transmembrane proteins (LolC and LolE).

The protein resides in the cell inner membrane. Its function is as follows. Part of the ABC transporter complex LolCDE involved in the translocation of mature outer membrane-directed lipoproteins, from the inner membrane to the periplasmic chaperone, LolA. Responsible for the formation of the LolA-lipoprotein complex in an ATP-dependent manner. This Chlorobium chlorochromatii (strain CaD3) protein is Lipoprotein-releasing system ATP-binding protein LolD 2.